Here is a 375-residue protein sequence, read N- to C-terminus: Alpha-2,8-sialyltransferase 8B (375 aa).

Topologically, residues M1–R6 are cytoplasmic. Residues S7–A23 traverse the membrane as a helical; Signal-anchor for type II membrane protein segment. Residues D24 to T375 are Lumenal-facing. N60, N72, N89, and N134 each carry an N-linked (GlcNAc...) asparagine glycan. Cystine bridges form between C157–C307 and C171–C371. The CMP-N-acetyl-beta-neuraminate site is built by N162 and N185. N-linked (GlcNAc...) asparagine glycosylation is found at N219 and N234. T294, T295, G296, W316, Y329, and H330 together coordinate CMP-N-acetyl-beta-neuraminate. The Proton donor/acceptor role is filled by H346.

Belongs to the glycosyltransferase 29 family. In terms of processing, autopolysialylated. Autopolysialylation is not a prerequisite for the polysialylation acitity, but enhances the polysialylation acitity.

Its subcellular location is the golgi apparatus membrane. The protein localises to the secreted. The protein resides in the cell membrane. The enzyme catalyses [N-acetyl-alpha-D-neuraminosyl-(2-&gt;8)](n) + CMP-N-acetyl-beta-neuraminate = [N-acetyl-alpha-D-neuraminosyl-(2-&gt;8)](n+1) + CMP + H(+). It functions in the pathway protein modification; protein glycosylation. Functionally, catalyzes the transfer of a sialic acid from a CMP-linked sialic acid donor onto a terminal alpha-2,3-, alpha-2,6-, or alpha-2,8-linked sialic acid of an N-linked glycan acceptor through alpha-2,8-linkages. Therefore, participates in polysialic acid synthesis on various sialylated N-acetyllactosaminyl oligosaccharides (alpha-2,3-, alpha-2,6-, or alpha-2,8-linked sialic acid), including NCAM1, NCAM1 N-glycans, FETUB N-glycans, and to a lesser extent sialylparagloboside (SPG) and AHSG, which does not require the initial addition of an alpha 2,8-sialic acid. However, does not exhibit sialic acid-polymerase activity. Catalyzes polysialic acid synthesis in the hippocampal on NCAM1 and supports neurite outgrowth. ST8SIA2-mediated polysialylation influences on oligodendrocyte differentiation and may promote the integrity of myelin and axons. The protein is Alpha-2,8-sialyltransferase 8B of Pan troglodytes (Chimpanzee).